The primary structure comprises 150 residues: D-aminoacyl-tRNA deacylase (150 aa).

The short motif at 136–137 is the Gly-cisPro motif, important for rejection of L-amino acids element; it reads GP.

The protein belongs to the DTD family. In terms of assembly, homodimer.

It is found in the cytoplasm. It catalyses the reaction glycyl-tRNA(Ala) + H2O = tRNA(Ala) + glycine + H(+). The enzyme catalyses a D-aminoacyl-tRNA + H2O = a tRNA + a D-alpha-amino acid + H(+). Its function is as follows. An aminoacyl-tRNA editing enzyme that deacylates mischarged D-aminoacyl-tRNAs. Also deacylates mischarged glycyl-tRNA(Ala), protecting cells against glycine mischarging by AlaRS. Acts via tRNA-based rather than protein-based catalysis; rejects L-amino acids rather than detecting D-amino acids in the active site. By recycling D-aminoacyl-tRNA to D-amino acids and free tRNA molecules, this enzyme counteracts the toxicity associated with the formation of D-aminoacyl-tRNA entities in vivo and helps enforce protein L-homochirality. This Staphylococcus saprophyticus subsp. saprophyticus (strain ATCC 15305 / DSM 20229 / NCIMB 8711 / NCTC 7292 / S-41) protein is D-aminoacyl-tRNA deacylase.